The sequence spans 174 residues: von Hippel-Lindau tumor suppressor homolog (174 aa).

The protein belongs to the VHL family. As to quaternary structure, interacts with hif-1 (hydroxylated on 'Pro-621'); the interaction induces hif-1 degradation. May be a component of the cullin E3 ubiquitin ligase complex.

It functions in the pathway protein modification; protein ubiquitination. Involved in the response to variation in environmental oxygen levels by targeting the hypoxia-inducible transcription factor hif-1 for proteasomal degradation when oxygen levels are normal (around 20%). By regulating hif-1 expression, plays a role in iron homeostasis, aging, heat acclimation and progeny size. Mediates resistance to enteropathogenic E.coli. Mediates susceptibility to B.thuringiensis pore-forming toxins. Not involved in P.aeruginosa susceptibility. This is von Hippel-Lindau tumor suppressor homolog from Caenorhabditis elegans.